The following is a 601-amino-acid chain: Putative ankyrin repeat protein R841 (601 aa).

ANK repeat units lie at residues 17–50 (NNIT…DVNA), 54–86 (HGKS…DVNH), 91–123 (QRSV…NINY), 165–197 (RENI…NIDH), 201–234 (YGQT…NINS), 238–269 (KGWS…EINS), 274–310 (NETM…SIDN), 314–349 (KGYT…NINS), 361–390 (VCCD…DVNS), 397–427 (TILM…NPNI), 432–463 (YHKF…DPNI), and 467–500 (IGNN…SYNC).

In Acanthamoeba polyphaga mimivirus (APMV), this protein is Putative ankyrin repeat protein R841.